We begin with the raw amino-acid sequence, 1355 residues long: Patatin-like phospholipase domain-containing protein 6 (1355 aa).

At 1–43 the chain is on the lumenal side; the sequence is MGTPSHELNTTSSGAEVIQKTLEEGLGRRICVAQPVPFVPQVL. An N-linked (GlcNAc...) asparagine glycan is attached at asparagine 9. Residues 44–64 traverse the membrane as a helical segment; sequence GVMIGAGVAVLVTAVLILLVV. Residues 65–1355 are Cytoplasmic-facing; sequence RRLRVQKTPA…QETPSSVADA (1291 aa). An a nucleoside 3',5'-cyclic phosphate-binding site is contributed by 179–306; it reads VLGHFEKPLF…VRVVQIIMVR (128 aa). Position 338 is a phosphoserine (serine 338). Positions 338-395 are disordered; that stretch reads SPGLPTRTSPVRGSKRVVSTSGTEDTSKETSGRPLDSIGAPLPGPAGDPVKPTSLEAP. Positions 343–361 are enriched in polar residues; it reads TRTSPVRGSKRVVSTSGTE. At threonine 345 the chain carries Phosphothreonine. A phosphoserine mark is found at serine 346, serine 356, and serine 405. Residues 492 to 614 and 610 to 730 each bind a nucleoside 3',5'-cyclic phosphate; these read ELAK…VAAR and TVAA…LSQK. The PNPLA domain maps to 961-1127; that stretch reads LVLGGGGARG…INNLPADIAR (167 aa). Residues 965-970 carry the GXGXXG motif; the sequence is GGGARG. Positions 992-996 match the GXSXG motif; sequence GTSIG. The Nucleophile role is filled by serine 994. The Proton acceptor role is filled by aspartate 1114. A DGA/G motif is present at residues 1114–1116; that stretch reads DGG. Residues 1286–1355 form a disordered region; it reads SYVSDGCADG…QETPSSVADA (70 aa). A compositionally biased stretch (acidic residues) spans 1293–1309; that stretch reads ADGEESDCLTEYEEDAG.

Belongs to the NTE family. Post-translationally, glycosylated. As to expression, expressed in brain, testes and kidney (at protein level). Expressed ubiquitously in brain of young mice. Reaching adulthood, there is a most prominent expression in Purkinje cells, granule cells and pyramidal neurons of the hippocampus and some large neurons in the medulla oblongata, nucleus dentatus and pons.

It is found in the endoplasmic reticulum membrane. It catalyses the reaction a 1-acyl-sn-glycero-3-phosphocholine + H2O = sn-glycerol 3-phosphocholine + a fatty acid + H(+). The enzyme catalyses 1-hexadecanoyl-sn-glycero-3-phosphocholine + H2O = sn-glycerol 3-phosphocholine + hexadecanoate + H(+). It carries out the reaction 1-hexadecanoyl-sn-glycero-3-phosphate + H2O = sn-glycerol 3-phosphate + hexadecanoate + H(+). The catalysed reaction is 1-(9Z-octadecenoyl)-sn-glycero-3-phosphocholine + H2O = sn-glycerol 3-phosphocholine + (9Z)-octadecenoate + H(+). It catalyses the reaction 1-hexadecanoylglycerol + H2O = glycerol + hexadecanoate + H(+). The enzyme catalyses 2-hexadecanoylglycerol + H2O = glycerol + hexadecanoate + H(+). It carries out the reaction 1-(9Z-octadecenoyl)-glycerol + H2O = glycerol + (9Z)-octadecenoate + H(+). The catalysed reaction is 2-(9Z-octadecenoyl)-glycerol + H2O = glycerol + (9Z)-octadecenoate + H(+). It catalyses the reaction 2-(5Z,8Z,11Z,14Z-eicosatetraenoyl)-glycerol + H2O = glycerol + (5Z,8Z,11Z,14Z)-eicosatetraenoate + H(+). With respect to regulation, inhibited by a series a OPs such as mipafox (MPX), phenyl saligenin phosphate (PSP), phenyl dipentyl phosphinate (PDPP), diisopropyl fluorophosphate and paraoxon. Phospholipase B that deacylates intracellular phosphatidylcholine (PtdCho), generating glycerophosphocholine (GroPtdCho). This deacylation occurs at both sn-2 and sn-1 positions of PtdCho. Catalyzes the hydrolysis of several naturally occurring membrane-associated lipids. Hydrolyzes lysophospholipids and monoacylglycerols, preferring the 1-acyl to the 2-acyl isomer. Does not catalyze hydrolysis of di- or triacylglycerols or fatty acid amides. This chain is Patatin-like phospholipase domain-containing protein 6 (Pnpla6), found in Mus musculus (Mouse).